The primary structure comprises 227 residues: Cytochrome c oxidase subunit 2 (227 aa).

Residues 1-26 lie on the Mitochondrial intermembrane side of the membrane; sequence MATWSNLNLQNSSSPLMEQLIFFHDH. Residues 27–48 traverse the membrane as a helical segment; sequence TLMILLMITVLVAYIMSMLFFN. Topologically, residues 49-62 are mitochondrial matrix; the sequence is LYTNRFLLEGQTIE. A helical membrane pass occupies residues 63–82; the sequence is IIWTILPAITLIFIALPSLR. Topologically, residues 83–227 are mitochondrial intermembrane; sequence LLYLLDESMD…FINWIKNYSS (145 aa). Residues His160, Cys195, Glu197, Cys199, His203, and Met206 each coordinate Cu cation. Glu197 provides a ligand contact to Mg(2+).

It belongs to the cytochrome c oxidase subunit 2 family. As to quaternary structure, component of the cytochrome c oxidase (complex IV, CIV), a multisubunit enzyme composed of a catalytic core of 3 subunits and several supernumerary subunits. The complex exists as a monomer or a dimer and forms supercomplexes (SCs) in the inner mitochondrial membrane with ubiquinol-cytochrome c oxidoreductase (cytochrome b-c1 complex, complex III, CIII). Cu cation serves as cofactor.

The protein resides in the mitochondrion inner membrane. It carries out the reaction 4 Fe(II)-[cytochrome c] + O2 + 8 H(+)(in) = 4 Fe(III)-[cytochrome c] + 2 H2O + 4 H(+)(out). Component of the cytochrome c oxidase, the last enzyme in the mitochondrial electron transport chain which drives oxidative phosphorylation. The respiratory chain contains 3 multisubunit complexes succinate dehydrogenase (complex II, CII), ubiquinol-cytochrome c oxidoreductase (cytochrome b-c1 complex, complex III, CIII) and cytochrome c oxidase (complex IV, CIV), that cooperate to transfer electrons derived from NADH and succinate to molecular oxygen, creating an electrochemical gradient over the inner membrane that drives transmembrane transport and the ATP synthase. Cytochrome c oxidase is the component of the respiratory chain that catalyzes the reduction of oxygen to water. Electrons originating from reduced cytochrome c in the intermembrane space (IMS) are transferred via the dinuclear copper A center (CU(A)) of subunit 2 and heme A of subunit 1 to the active site in subunit 1, a binuclear center (BNC) formed by heme A3 and copper B (CU(B)). The BNC reduces molecular oxygen to 2 water molecules using 4 electrons from cytochrome c in the IMS and 4 protons from the mitochondrial matrix. This is Cytochrome c oxidase subunit 2 (COII) from Acheta domesticus (House cricket).